A 507-amino-acid polypeptide reads, in one-letter code: ATP synthase subunit alpha, chloroplastic (507 aa).

170-177 (GDRQTGKT) serves as a coordination point for ATP. Disordered stretches follow at residues 278-325 (PRRP…TQAG), 392-430 (EPEASAQFASDPDKATRNQSARGQRSRELLKQSQPAPLP), and 452-471 (GQVQGSPAQSREYLVTNKPE). Positions 282 to 303 (PGREAHPGDVPHLHPRPPERAA) are enriched in basic and acidic residues. The segment covering 305-322 (LSSQPGEGSTTASPTVET) has biased composition (polar residues).

Belongs to the ATPase alpha/beta chains family. As to quaternary structure, F-type ATPases have 2 components, CF(1) - the catalytic core - and CF(0) - the membrane proton channel. CF(1) has five subunits: alpha(3), beta(3), gamma(1), delta(1), epsilon(1). CF(0) has four main subunits: a, b, b' and c.

Its subcellular location is the plastid. It localises to the chloroplast thylakoid membrane. It carries out the reaction ATP + H2O + 4 H(+)(in) = ADP + phosphate + 5 H(+)(out). Functionally, produces ATP from ADP in the presence of a proton gradient across the membrane. The alpha chain is a regulatory subunit. The polypeptide is ATP synthase subunit alpha, chloroplastic (Selaginella uncinata (Blue spike-moss)).